The chain runs to 429 residues: Cytochrome bc1 complex Rieske iron-sulfur subunit (429 aa).

The interval 1–45 is disordered; sequence MSRADDDAVGVPPTCGGRSDEEERRIVPGPNPQDGAKDGAKATAV. Transmembrane regions (helical) follow at residues 96-116, 137-157, and 207-227; these read VAVW…IFLF, PLYG…AVLY, and FGVG…GGLI. The 95-residue stretch at 316–410 folds into the Rieske domain; the sequence is RNPVMLIRIK…ITIDTDGYLV (95 aa). Residues Cys353, His355, Cys372, and His375 each contribute to the [2Fe-2S] cluster site. The cysteines at positions 358 and 374 are disulfide-linked.

The protein belongs to the Rieske iron-sulfur protein family. In terms of assembly, the cytochrome bc1 complex is composed of a cytochrome b (QcrB), the Rieske iron-sulfur protein (QcrA) and a diheme cytochrome c (QcrC) subunit. [2Fe-2S] cluster serves as cofactor.

The protein resides in the cell membrane. Functionally, iron-sulfur subunit of the cytochrome bc1 complex, an essential component of the respiratory electron transport chain required for ATP synthesis. The bc1 complex catalyzes the oxidation of menaquinol and the reduction of cytochrome c in the respiratory chain. The bc1 complex operates through a Q-cycle mechanism that couples electron transfer to generation of the proton gradient that drives ATP synthesis. The sequence is that of Cytochrome bc1 complex Rieske iron-sulfur subunit (qcrA) from Mycobacterium tuberculosis (strain CDC 1551 / Oshkosh).